A 901-amino-acid chain; its full sequence is HTH-type transcriptional regulator MalT (901 aa).

39–46 (SPAGYGKT) provides a ligand contact to ATP. Residues 829-894 (ELIRTSPLTQ…DAVQHAQQLL (66 aa)) enclose the HTH luxR-type domain. Residues 853–872 (NEQIAGELAVAATTIKTHIR) constitute a DNA-binding region (H-T-H motif).

The protein belongs to the MalT family. As to quaternary structure, monomer in solution. Oligomerizes to an active state in the presence of the positive effectors ATP and maltotriose.

Its activity is regulated as follows. Activated by ATP and maltotriose, which are both required for DNA binding. Positively regulates the transcription of the maltose regulon whose gene products are responsible for uptake and catabolism of malto-oligosaccharides. Specifically binds to the promoter region of its target genes, recognizing a short DNA motif called the MalT box. The protein is HTH-type transcriptional regulator MalT of Salmonella typhi.